A 425-amino-acid polypeptide reads, in one-letter code: Serine--tRNA ligase (425 aa).

The interval 108-134 is disordered; that stretch reads YPNLPSEACPDGRSEDDNKEVRRWGDP. The span at 117–134 shows a compositional bias: basic and acidic residues; the sequence is PDGRSEDDNKEVRRWGDP. L-serine is bound at residue 233 to 235; it reads TAE. 264–266 contacts ATP; sequence RRE. Glutamate 287 serves as a coordination point for L-serine. 351 to 354 serves as a coordination point for ATP; sequence EISS. Serine 385 lines the L-serine pocket.

The protein belongs to the class-II aminoacyl-tRNA synthetase family. Type-1 seryl-tRNA synthetase subfamily. In terms of assembly, homodimer. The tRNA molecule binds across the dimer.

The protein resides in the cytoplasm. The catalysed reaction is tRNA(Ser) + L-serine + ATP = L-seryl-tRNA(Ser) + AMP + diphosphate + H(+). It carries out the reaction tRNA(Sec) + L-serine + ATP = L-seryl-tRNA(Sec) + AMP + diphosphate + H(+). It functions in the pathway aminoacyl-tRNA biosynthesis; selenocysteinyl-tRNA(Sec) biosynthesis; L-seryl-tRNA(Sec) from L-serine and tRNA(Sec): step 1/1. In terms of biological role, catalyzes the attachment of serine to tRNA(Ser). Is also able to aminoacylate tRNA(Sec) with serine, to form the misacylated tRNA L-seryl-tRNA(Sec), which will be further converted into selenocysteinyl-tRNA(Sec). The protein is Serine--tRNA ligase of Synechococcus sp. (strain CC9311).